Consider the following 520-residue polypeptide: 2-isopropylmalate synthase (520 aa).

The region spanning 12 to 274 is the Pyruvate carboxyltransferase domain; the sequence is IRIFDTTLRD…DTAINTPRIV (263 aa). 4 residues coordinate Mn(2+): Asp-21, His-209, His-211, and Asn-245. The interval 396–520 is regulatory domain; it reads RLASMTISDV…VVAGKTAAVA (125 aa).

Belongs to the alpha-IPM synthase/homocitrate synthase family. LeuA type 1 subfamily. As to quaternary structure, homodimer. Requires Mn(2+) as cofactor.

It localises to the cytoplasm. It carries out the reaction 3-methyl-2-oxobutanoate + acetyl-CoA + H2O = (2S)-2-isopropylmalate + CoA + H(+). It participates in amino-acid biosynthesis; L-leucine biosynthesis; L-leucine from 3-methyl-2-oxobutanoate: step 1/4. Its function is as follows. Catalyzes the condensation of the acetyl group of acetyl-CoA with 3-methyl-2-oxobutanoate (2-ketoisovalerate) to form 3-carboxy-3-hydroxy-4-methylpentanoate (2-isopropylmalate). This Xanthomonas campestris pv. campestris (strain B100) protein is 2-isopropylmalate synthase.